We begin with the raw amino-acid sequence, 275 residues long: Sulfur carrier protein FdhD (275 aa).

Cys-121 functions as the Cysteine persulfide intermediate in the catalytic mechanism. 258-263 (FSKPGR) is a binding site for Mo-bis(molybdopterin guanine dinucleotide).

The protein belongs to the FdhD family.

The protein localises to the cytoplasm. In terms of biological role, required for formate dehydrogenase (FDH) activity. Acts as a sulfur carrier protein that transfers sulfur from IscS to the molybdenum cofactor prior to its insertion into FDH. The polypeptide is Sulfur carrier protein FdhD (Yersinia enterocolitica serotype O:8 / biotype 1B (strain NCTC 13174 / 8081)).